The chain runs to 323 residues: CYFIP-related Rac1 interactor A (323 aa).

It belongs to the CYRI family.

Its subcellular location is the membrane. Its function is as follows. May negatively regulate RAC1 signaling and RAC1-driven cytoskeletal remodeling. May regulate chemotaxis, cell migration and epithelial polarization by controlling the polarity, plasticity, duration and extent of protrusions. The protein is CYFIP-related Rac1 interactor A (CYRIA) of Gallus gallus (Chicken).